Reading from the N-terminus, the 179-residue chain is Large ribosomal subunit protein uL5 (179 aa).

Belongs to the universal ribosomal protein uL5 family. Part of the 50S ribosomal subunit; part of the 5S rRNA/L5/L18/L25 subcomplex. Contacts the 5S rRNA and the P site tRNA. Forms a bridge to the 30S subunit in the 70S ribosome.

Functionally, this is one of the proteins that bind and probably mediate the attachment of the 5S RNA into the large ribosomal subunit, where it forms part of the central protuberance. In the 70S ribosome it contacts protein S13 of the 30S subunit (bridge B1b), connecting the 2 subunits; this bridge is implicated in subunit movement. Contacts the P site tRNA; the 5S rRNA and some of its associated proteins might help stabilize positioning of ribosome-bound tRNAs. This Bordetella avium (strain 197N) protein is Large ribosomal subunit protein uL5.